We begin with the raw amino-acid sequence, 426 residues long: Enolase (426 aa).

Glutamine 163 contributes to the (2R)-2-phosphoglycerate binding site. The active-site Proton donor is the glutamate 205. Residues aspartate 242, glutamate 285, and aspartate 312 each coordinate Mg(2+). (2R)-2-phosphoglycerate is bound by residues lysine 337, arginine 366, serine 367, and lysine 388. Catalysis depends on lysine 337, which acts as the Proton acceptor.

The protein belongs to the enolase family. Mg(2+) is required as a cofactor.

Its subcellular location is the cytoplasm. The protein localises to the secreted. It localises to the cell surface. The enzyme catalyses (2R)-2-phosphoglycerate = phosphoenolpyruvate + H2O. It functions in the pathway carbohydrate degradation; glycolysis; pyruvate from D-glyceraldehyde 3-phosphate: step 4/5. Catalyzes the reversible conversion of 2-phosphoglycerate (2-PG) into phosphoenolpyruvate (PEP). It is essential for the degradation of carbohydrates via glycolysis. In Gluconacetobacter diazotrophicus (strain ATCC 49037 / DSM 5601 / CCUG 37298 / CIP 103539 / LMG 7603 / PAl5), this protein is Enolase.